The sequence spans 172 residues: 3-hydroxydecanoyl-[acyl-carrier-protein] dehydratase (172 aa).

H71 is an active-site residue.

It belongs to the thioester dehydratase family. FabA subfamily. As to quaternary structure, homodimer.

The protein localises to the cytoplasm. The enzyme catalyses a (3R)-hydroxyacyl-[ACP] = a (2E)-enoyl-[ACP] + H2O. The catalysed reaction is (3R)-hydroxydecanoyl-[ACP] = (2E)-decenoyl-[ACP] + H2O. It carries out the reaction (2E)-decenoyl-[ACP] = (3Z)-decenoyl-[ACP]. It participates in lipid metabolism; fatty acid biosynthesis. In terms of biological role, necessary for the introduction of cis unsaturation into fatty acids. Catalyzes the dehydration of (3R)-3-hydroxydecanoyl-ACP to E-(2)-decenoyl-ACP and then its isomerization to Z-(3)-decenoyl-ACP. Can catalyze the dehydratase reaction for beta-hydroxyacyl-ACPs with saturated chain lengths up to 16:0, being most active on intermediate chain length. In Vibrio vulnificus (strain CMCP6), this protein is 3-hydroxydecanoyl-[acyl-carrier-protein] dehydratase.